The sequence spans 156 residues: SPbeta prophage-derived uncharacterized protein YorH (156 aa).

The polypeptide is SPbeta prophage-derived uncharacterized protein YorH (yorH) (Bacillus subtilis (strain 168)).